Consider the following 142-residue polypeptide: MAKKVTGYLKLQVPAGAANPSPPIGPALGQRGLNIMEFCKAFNAQTQKEEKNTPIPVVITIYADRSFTFEMKTPPMSYFLKQAAKIQSGSKAPGRDKAGKVTKAQVREIAEKKMKDLNCDSIESAMKMVEGSARSMGLEVAG.

This sequence belongs to the universal ribosomal protein uL11 family. In terms of assembly, part of the ribosomal stalk of the 50S ribosomal subunit. Interacts with L10 and the large rRNA to form the base of the stalk. L10 forms an elongated spine to which L12 dimers bind in a sequential fashion forming a multimeric L10(L12)X complex. One or more lysine residues are methylated.

Forms part of the ribosomal stalk which helps the ribosome interact with GTP-bound translation factors. The polypeptide is Large ribosomal subunit protein uL11 (Bradyrhizobium sp. (strain BTAi1 / ATCC BAA-1182)).